The sequence spans 478 residues: MDRSLGWQGSSVPEDRTEAGIKRFLEDTTDDGELSKFVKDFSGNESCHPPEAKTWASRPQVLEPRPQAPDLYDDDLEFRPPSWPQSADNQQYFCAPAPLSPSARPRSPWGKLDPYDSSEDDKEYVGFATLPNQVHRKSVKKGFDFTLMVAGESGLGKSTLVNSLFLTDLYRDRKLLGAEERIMQTVEITKHAVDIEEKGVRLRLTIVDTPGFGDAVNNTECWKPVAEYIDQQFEQYFRDESGLNRKNIQDNRVHCCLYFISPFGHGLRPLDVEFMKALHQRVNIVPILAKADTLTPPEVDRKKRKIREEIEHFGIKIYQFPDCDSDEDEDFKLQDQALKESIPFAVIGSNTVVEARGRRVRGRLYPWGIVEVENPGHCDFVKLRTMLVRTHMQDLKDVTRETHYENYRAQCIQSMTRLVVKERNRNKLTRESGTDFPIPAVPPGTDPETEKLIREKDEELRRMQEILHKIQKQMKETY.

Disordered stretches follow at residues 40-74 (DFSG…LYDD) and 87-115 (ADNQ…LDPY). The segment covering 95–108 (APAPLSPSARPRSP) has biased composition (low complexity). 2 positions are modified to phosphoserine: S117 and S118. The 274-residue stretch at 141–414 (KGFDFTLMVA…ENYRAQCIQS (274 aa)) folds into the Septin-type G domain. Positions 151-158 (GESGLGKS) are G1 motif. GTP-binding positions include 151–158 (GESGLGKS) and T185. The segment at 208–211 (DTPG) is G3 motif. The interval 289–292 (AKAD) is G4 motif. 290-298 (KADTLTPPE) lines the GTP pocket. S325 carries the phosphoserine modification. 2 residues coordinate GTP: G348 and R363. The tract at residues 428-448 (LTRESGTDFPIPAVPPGTDPE) is disordered. At S432 the chain carries Phosphoserine. T434 is modified (phosphothreonine). Residues 446–478 (DPETEKLIREKDEELRRMQEILHKIQKQMKETY) adopt a coiled-coil conformation.

Belongs to the TRAFAC class TrmE-Era-EngA-EngB-Septin-like GTPase superfamily. Septin GTPase family. Septins polymerize into heterooligomeric protein complexes that form filaments, and can associate with cellular membranes, actin filaments and microtubules. GTPase activity is required for filament formation. Interacts with SEPTIN8. Component of a septin core octameric complex consisting of SEPTIN12, SEPTIN7, SEPTIN6 and SEPTIN2 or SEPTIN4 in the order 12-7-6-2-2-6-7-12 or 12-7-6-4-4-6-7-12. Interacts with SEPTIN14 (via C-terminus). Interacts with DYRK1A. Interacts with SLC6A3/DAT and SNCA/alpha-synuclein. Interacts with STX1A; in the striatum. Interacts with XIAP (via BIR3 domain) following the induction of apoptosis. Interacts with AREL1 (via HECT domain); in the cytoplasm following induction of apoptosis. In terms of processing, ubiquitinated by AREL1. Phosphorylated by DYRK1A.

The protein localises to the cytoplasm. The protein resides in the cell projection. It localises to the cilium. Its subcellular location is the flagellum. It is found in the cytoplasmic vesicle. The protein localises to the secretory vesicle. The protein resides in the axon. It localises to the dendrite. Its subcellular location is the perikaryon. It is found in the synapse. Filament-forming cytoskeletal GTPase. Pro-apoptotic protein involved in LGR5-positive intestinal stem cell and Paneth cell expansion in the intestines, via its interaction with XIAP. May also play a role in the regulation of cell fate in the intestine. Positive regulator of apoptosis involved in hematopoietic stem cell homeostasis; via its interaction with XIAP. Negative regulator of repair and hair follicle regeneration in response to injury, due to inhibition of hair follicle stem cell proliferation, potentially via its interaction with XIAP. Plays an important role in male fertility and sperm motility. During spermiogenesis, essential for the establishment of the annulus (a fibrous ring structure connecting the midpiece and the principal piece of the sperm flagellum) which is a requisite for the structural and mechanical integrity of the sperm. Involved in the migration of cortical neurons and the formation of neuron leading processes during embryonic development. Required for dopaminergic metabolism in presynaptic autoreceptors; potentially via activity as a presynaptic scaffold protein. This Macaca fascicularis (Crab-eating macaque) protein is Septin-4.